A 90-amino-acid polypeptide reads, in one-letter code: EGVPSTAIREISLLKEMQHANIVRLQDVVHSEKRLYLVFEYLDLDLKKHMDSSPEFSKDPRLVKMFLYQILRGIAYCHSHRVLHRDLKPQ.

The 90-residue stretch at 1-90 (EGVPSTAIRE…RVLHRDLKPQ (90 aa)) folds into the Protein kinase domain. Asp-86 acts as the Proton acceptor in catalysis.

The protein belongs to the protein kinase superfamily. CMGC Ser/Thr protein kinase family. CDC2/CDKX subfamily. As to expression, differentially expressed in leaves, protoplasts.

It catalyses the reaction L-seryl-[protein] + ATP = O-phospho-L-seryl-[protein] + ADP + H(+). The catalysed reaction is L-threonyl-[protein] + ATP = O-phospho-L-threonyl-[protein] + ADP + H(+). It carries out the reaction [DNA-directed RNA polymerase] + ATP = phospho-[DNA-directed RNA polymerase] + ADP + H(+). Its activity is regulated as follows. Phosphorylation inactivates the enzyme. Its function is as follows. Plays a key role in the control of the eukaryotic cell cycle. Component of the kinase complex that phosphorylates the repetitive C-terminus of RNA polymerase II. The protein is Cell division control protein 2 homolog (CDC2) of Petunia hybrida (Petunia).